Here is a 249-residue protein sequence, read N- to C-terminus: 2,3-bisphosphoglycerate-dependent phosphoglycerate mutase (249 aa).

Residues 8 to 15, 21 to 22, R60, 87 to 90, K98, 114 to 115, and 183 to 184 each bind substrate; these read RHGESIWN, TG, ERHY, RR, and GN. H9 serves as the catalytic Tele-phosphohistidine intermediate. Catalysis depends on E87, which acts as the Proton donor/acceptor.

Belongs to the phosphoglycerate mutase family. BPG-dependent PGAM subfamily.

It catalyses the reaction (2R)-2-phosphoglycerate = (2R)-3-phosphoglycerate. Its pathway is carbohydrate degradation; glycolysis; pyruvate from D-glyceraldehyde 3-phosphate: step 3/5. Catalyzes the interconversion of 2-phosphoglycerate and 3-phosphoglycerate. The protein is 2,3-bisphosphoglycerate-dependent phosphoglycerate mutase of Caldanaerobacter subterraneus subsp. tengcongensis (strain DSM 15242 / JCM 11007 / NBRC 100824 / MB4) (Thermoanaerobacter tengcongensis).